We begin with the raw amino-acid sequence, 288 residues long: Alpha/beta hydrolase domain-containing protein 17B (288 aa).

Active-site charge relay system residues include Ser-170, Asp-235, and His-264. A Phosphoserine modification is found at Ser-282.

It belongs to the AB hydrolase superfamily. ABHD17 family. Post-translationally, palmitoylated on cysteine residues located in a cysteine cluster at the N-terminus which promotes membrane localization. Palmitoylation is required for post-synaptic localization and for depalmitoylating activity towards DLG4/PSD95. Expressed in brain.

The protein localises to the cell membrane. It is found in the recycling endosome membrane. The protein resides in the cell projection. It localises to the dendritic spine. Its subcellular location is the postsynaptic density membrane. The catalysed reaction is S-hexadecanoyl-L-cysteinyl-[protein] + H2O = L-cysteinyl-[protein] + hexadecanoate + H(+). Its function is as follows. Hydrolyzes fatty acids from S-acylated cysteine residues in proteins. Has depalmitoylating activity towards DLG4/PSD95. Has depalmitoylating activity towards GAP43. Has depalmitoylating activity towards MAP6. Has depalmitoylating activity towards NRAS. This chain is Alpha/beta hydrolase domain-containing protein 17B, found in Mus musculus (Mouse).